The primary structure comprises 203 residues: Meiotically up-regulated protein PB17E12.09 (203 aa).

The stretch at 92–177 (CNRKIEGYIK…KEMQLYMTKI (86 aa)) forms a coiled coil.

The protein localises to the cytoplasm. In terms of biological role, has a role in meiosis and sporulation. This Schizosaccharomyces pombe (strain 972 / ATCC 24843) (Fission yeast) protein is Meiotically up-regulated protein PB17E12.09.